Here is a 154-residue protein sequence, read N- to C-terminus: Crossover junction endodeoxyribonuclease RuvC (154 aa).

Residues Asp-7, Glu-67, and Asp-139 contribute to the active site. Mg(2+)-binding residues include Asp-7, Glu-67, and Asp-139.

The protein belongs to the RuvC family. Homodimer which binds Holliday junction (HJ) DNA. The HJ becomes 2-fold symmetrical on binding to RuvC with unstacked arms; it has a different conformation from HJ DNA in complex with RuvA. In the full resolvosome a probable DNA-RuvA(4)-RuvB(12)-RuvC(2) complex forms which resolves the HJ. Requires Mg(2+) as cofactor.

The protein resides in the cytoplasm. It catalyses the reaction Endonucleolytic cleavage at a junction such as a reciprocal single-stranded crossover between two homologous DNA duplexes (Holliday junction).. Functionally, the RuvA-RuvB-RuvC complex processes Holliday junction (HJ) DNA during genetic recombination and DNA repair. Endonuclease that resolves HJ intermediates. Cleaves cruciform DNA by making single-stranded nicks across the HJ at symmetrical positions within the homologous arms, yielding a 5'-phosphate and a 3'-hydroxyl group; requires a central core of homology in the junction. The consensus cleavage sequence is 5'-(A/T)TT(C/G)-3'. Cleavage occurs on the 3'-side of the TT dinucleotide at the point of strand exchange. HJ branch migration catalyzed by RuvA-RuvB allows RuvC to scan DNA until it finds its consensus sequence, where it cleaves and resolves the cruciform DNA. The protein is Crossover junction endodeoxyribonuclease RuvC of Synechococcus sp. (strain CC9605).